We begin with the raw amino-acid sequence, 184 residues long: ATP synthase subunit b, chloroplastic (184 aa).

The helical transmembrane segment at 27–49 threads the bilayer; sequence LATNPINLSVVFGVLIFFGKGVL.

This sequence belongs to the ATPase B chain family. As to quaternary structure, F-type ATPases have 2 components, F(1) - the catalytic core - and F(0) - the membrane proton channel. F(1) has five subunits: alpha(3), beta(3), gamma(1), delta(1), epsilon(1). F(0) has four main subunits: a(1), b(1), b'(1) and c(10-14). The alpha and beta chains form an alternating ring which encloses part of the gamma chain. F(1) is attached to F(0) by a central stalk formed by the gamma and epsilon chains, while a peripheral stalk is formed by the delta, b and b' chains.

It is found in the plastid. It localises to the chloroplast thylakoid membrane. In terms of biological role, f(1)F(0) ATP synthase produces ATP from ADP in the presence of a proton or sodium gradient. F-type ATPases consist of two structural domains, F(1) containing the extramembraneous catalytic core and F(0) containing the membrane proton channel, linked together by a central stalk and a peripheral stalk. During catalysis, ATP synthesis in the catalytic domain of F(1) is coupled via a rotary mechanism of the central stalk subunits to proton translocation. Its function is as follows. Component of the F(0) channel, it forms part of the peripheral stalk, linking F(1) to F(0). This is ATP synthase subunit b, chloroplastic from Arabis hirsuta (Hairy rock-cress).